We begin with the raw amino-acid sequence, 313 residues long: Protein FixB (313 aa).

FAD is bound at residue 255–283; the sequence is LYLAVGISGQIQHMVGANASQTIFAINKD.

The protein belongs to the ETF alpha-subunit/FixB family. As to quaternary structure, heterodimer of FixA and FixB.

It functions in the pathway amine and polyamine metabolism; carnitine metabolism. In terms of biological role, required for anaerobic carnitine reduction. May bring reductant to CaiA. This chain is Protein FixB, found in Escherichia coli (strain K12 / MC4100 / BW2952).